Consider the following 490-residue polypeptide: MTQWEVVIGLETHAQLSTVSKIFSGASTQFGAEPNTQACPVDLALPGVLPVLNRGAVERAIRFGLAIGATVAPRSIFARKNYFYPDLPKGYQISQYEIPVVQGGQITIQVPANEKAGKQAYSKTVNLTRAHLEEDAGKSLHEDFAGMTGIDLNRAGTPLLEIVTEPEMRSAAEAVAYAKALHGLVVWLGICDGNMQEGSFRCDANVSVRPVGQEKFGTRAEIKNLNSFRFLEDAINYEVRRQIELIEDGGEVVQETRLYDPDKRETRSMRSKEDAHDYRYFPDPDLMPLVIGADWIERVKGEMPELPAAMQQRFVEQYGVSAYDAGVLTSTKAMAAYFEAVVAKAGAANAKIAANWLMGDVSSQLNRDGIDIDACPVSAAQLALVLQRIADGTISNKIAKEIFVAIWDEKAADEGAADRIIDAKGLKQISDTGALEAIIDEVLAANAKSVEEFRAGKEKAFNALVGQAMKATKGKANPQQVNELLKKKLG.

The protein belongs to the GatB/GatE family. GatB subfamily. As to quaternary structure, heterotrimer of A, B and C subunits.

It carries out the reaction L-glutamyl-tRNA(Gln) + L-glutamine + ATP + H2O = L-glutaminyl-tRNA(Gln) + L-glutamate + ADP + phosphate + H(+). It catalyses the reaction L-aspartyl-tRNA(Asn) + L-glutamine + ATP + H2O = L-asparaginyl-tRNA(Asn) + L-glutamate + ADP + phosphate + 2 H(+). In terms of biological role, allows the formation of correctly charged Asn-tRNA(Asn) or Gln-tRNA(Gln) through the transamidation of misacylated Asp-tRNA(Asn) or Glu-tRNA(Gln) in organisms which lack either or both of asparaginyl-tRNA or glutaminyl-tRNA synthetases. The reaction takes place in the presence of glutamine and ATP through an activated phospho-Asp-tRNA(Asn) or phospho-Glu-tRNA(Gln). This chain is Aspartyl/glutamyl-tRNA(Asn/Gln) amidotransferase subunit B, found in Burkholderia thailandensis (strain ATCC 700388 / DSM 13276 / CCUG 48851 / CIP 106301 / E264).